A 382-amino-acid polypeptide reads, in one-letter code: MGPIGAEADENQTVEEMKMEPSGPGHTTPRGELAPDSEPELKDSTKLIEVQIILILAYCSIILLGVVGNSLVIHVVIKFKSMRTVTNFFIANLAVADLLVNTLCLPFTLTYTLMGEWKMGPVLCHLVPYAQGLAVQVSTITLTVIALDRHRCIVYHLESKISKRISFLIIGLAWGISALLASPLAIFREYSLIEIIPDFEIVACTEKWPGEEKSIYGTVYSLSSLLILYVLPLGIISFSYARIWSKLKNHVSPGGVNDHYHQRRQKTTKMLVCVVVVFAVSWLPLHAFQLAVDIDSQVLDLKEYKLIFTVFHIIAMCSTFANPLLYGWMNSNYRKAFLSAFRCEQRLDAIHSEVSMTSKAKKNLEATKNGGPDDSFTEATNV.

Residues M1–P39 form a disordered region. Topologically, residues M1–K46 are extracellular. Residue N11 is glycosylated (N-linked (GlcNAc...) asparagine). A helical membrane pass occupies residues L47–V67. The Cytoplasmic segment spans residues G68–N87. Residues F88–T108 form a helical membrane-spanning segment. Residues L109–H125 are Extracellular-facing. The cysteines at positions 124 and 204 are disulfide-linked. A helical membrane pass occupies residues L126–A146. Residues L147–S166 are Cytoplasmic-facing. A helical transmembrane segment spans residues F167–F187. The Extracellular segment spans residues R188–G217. Residues T218–F238 form a helical membrane-spanning segment. Residues S239–K269 lie on the Cytoplasmic side of the membrane. A helical membrane pass occupies residues M270–L290. The Extracellular portion of the chain corresponds to A291–K305. Residues L306–Y326 form a helical membrane-spanning segment. Residues G327–V382 are Cytoplasmic-facing. A lipid anchor (S-palmitoyl cysteine) is attached at C343. The segment at N363–V382 is disordered.

It belongs to the G-protein coupled receptor 1 family.

The protein localises to the cell membrane. Functionally, receptor for neuropeptide Y and peptide YY. The sequence is that of Neuropeptide Y receptor type 2 (NPY2R) from Sus scrofa (Pig).